The chain runs to 305 residues: Tetraacyldisaccharide 4'-kinase (305 aa).

39 to 46 (SVGGNGKT) serves as a coordination point for ATP.

Belongs to the LpxK family.

It catalyses the reaction a lipid A disaccharide + ATP = a lipid IVA + ADP + H(+). It participates in glycolipid biosynthesis; lipid IV(A) biosynthesis; lipid IV(A) from (3R)-3-hydroxytetradecanoyl-[acyl-carrier-protein] and UDP-N-acetyl-alpha-D-glucosamine: step 6/6. Functionally, transfers the gamma-phosphate of ATP to the 4'-position of a tetraacyldisaccharide 1-phosphate intermediate (termed DS-1-P) to form tetraacyldisaccharide 1,4'-bis-phosphate (lipid IVA). The sequence is that of Tetraacyldisaccharide 4'-kinase from Pseudoalteromonas atlantica (strain T6c / ATCC BAA-1087).